The primary structure comprises 153 residues: UPF0260 protein YcgN (153 aa).

It belongs to the UPF0260 family.

The protein is UPF0260 protein YcgN of Shigella boydii serotype 18 (strain CDC 3083-94 / BS512).